We begin with the raw amino-acid sequence, 288 residues long: 33 kDa chaperonin (288 aa).

2 cysteine pairs are disulfide-bonded: C236-C238 and C269-C272.

This sequence belongs to the HSP33 family. Post-translationally, under oxidizing conditions two disulfide bonds are formed involving the reactive cysteines. Under reducing conditions zinc is bound to the reactive cysteines and the protein is inactive.

The protein resides in the cytoplasm. Functionally, redox regulated molecular chaperone. Protects both thermally unfolding and oxidatively damaged proteins from irreversible aggregation. Plays an important role in the bacterial defense system toward oxidative stress. This is 33 kDa chaperonin from Lactococcus lactis subsp. cremoris (strain SK11).